We begin with the raw amino-acid sequence, 73 residues long: MKSEIKKNDMVKVIAGDDKGKVAKVLAVLPKTSQVVVEGCKVVKKAIKPTDDNPKGGFIKKEKPMHISNVKKA.

Basic and acidic residues predominate over residues 53-65; it reads NPKGGFIKKEKPM. The tract at residues 53 to 73 is disordered; sequence NPKGGFIKKEKPMHISNVKKA.

Belongs to the universal ribosomal protein uL24 family. Part of the 50S ribosomal subunit.

Its function is as follows. One of two assembly initiator proteins, it binds directly to the 5'-end of the 23S rRNA, where it nucleates assembly of the 50S subunit. One of the proteins that surrounds the polypeptide exit tunnel on the outside of the subunit. This chain is Large ribosomal subunit protein uL24, found in Helicobacter pylori (strain J99 / ATCC 700824) (Campylobacter pylori J99).